A 78-amino-acid chain; its full sequence is Large ribosomal subunit protein bL28 (78 aa).

Positions 1–23 (MSRVCQVTGKKPMVGNNRSHAKN) are disordered.

The protein belongs to the bacterial ribosomal protein bL28 family.

The sequence is that of Large ribosomal subunit protein bL28 from Shewanella sediminis (strain HAW-EB3).